The sequence spans 859 residues: DNA mismatch repair protein MutS (859 aa).

An ATP-binding site is contributed by 614 to 621; that stretch reads GPNMGGKS.

Belongs to the DNA mismatch repair MutS family.

This protein is involved in the repair of mismatches in DNA. It is possible that it carries out the mismatch recognition step. This protein has a weak ATPase activity. This chain is DNA mismatch repair protein MutS, found in Histophilus somni (strain 2336) (Haemophilus somnus).